Reading from the N-terminus, the 100-residue chain is Urease subunit gamma (100 aa).

Belongs to the urease gamma subunit family. As to quaternary structure, heterotrimer of UreA (gamma), UreB (beta) and UreC (alpha) subunits. Three heterotrimers associate to form the active enzyme.

It is found in the cytoplasm. It carries out the reaction urea + 2 H2O + H(+) = hydrogencarbonate + 2 NH4(+). The protein operates within nitrogen metabolism; urea degradation; CO(2) and NH(3) from urea (urease route): step 1/1. This Tolumonas auensis (strain DSM 9187 / NBRC 110442 / TA 4) protein is Urease subunit gamma.